The sequence spans 282 residues: Shikimate dehydrogenase (NADP(+)) (282 aa).

Shikimate-binding positions include 19–21 and Thr66; that span reads TQS. Catalysis depends on Lys70, which acts as the Proton acceptor. Shikimate-binding residues include Asn91 and Asp107. Residues 132–136, 155–160, Ile224, and Gly246 contribute to the NADP(+) site; these read GAGGA and NRTITR.

Belongs to the shikimate dehydrogenase family. As to quaternary structure, homodimer.

It catalyses the reaction shikimate + NADP(+) = 3-dehydroshikimate + NADPH + H(+). It functions in the pathway metabolic intermediate biosynthesis; chorismate biosynthesis; chorismate from D-erythrose 4-phosphate and phosphoenolpyruvate: step 4/7. Functionally, involved in the biosynthesis of the chorismate, which leads to the biosynthesis of aromatic amino acids. Catalyzes the reversible NADPH linked reduction of 3-dehydroshikimate (DHSA) to yield shikimate (SA). This chain is Shikimate dehydrogenase (NADP(+)), found in Buchnera aphidicola subsp. Baizongia pistaciae (strain Bp).